Consider the following 309-residue polypeptide: NAD kinase (309 aa).

The active-site Proton acceptor is the D89. Residues 89 to 90 (DG), 163 to 164 (NE), H174, R191, D193, and 204 to 209 (TAYSLS) each bind NAD(+).

It belongs to the NAD kinase family. A divalent metal cation serves as cofactor.

Its subcellular location is the cytoplasm. It carries out the reaction NAD(+) + ATP = ADP + NADP(+) + H(+). Its function is as follows. Involved in the regulation of the intracellular balance of NAD and NADP, and is a key enzyme in the biosynthesis of NADP. Catalyzes specifically the phosphorylation on 2'-hydroxyl of the adenosine moiety of NAD to yield NADP. In Shewanella piezotolerans (strain WP3 / JCM 13877), this protein is NAD kinase.